A 369-amino-acid polypeptide reads, in one-letter code: Flagellar P-ring protein (369 aa).

The signal sequence occupies residues 1–22 (MIKLKQLIAATLLLSAAFGAHA).

Belongs to the FlgI family. In terms of assembly, the basal body constitutes a major portion of the flagellar organelle and consists of four rings (L,P,S, and M) mounted on a central rod.

The protein localises to the periplasm. The protein resides in the bacterial flagellum basal body. In terms of biological role, assembles around the rod to form the L-ring and probably protects the motor/basal body from shearing forces during rotation. In Pseudomonas syringae pv. tomato (strain ATCC BAA-871 / DC3000), this protein is Flagellar P-ring protein.